The sequence spans 164 residues: Phosphopantetheine adenylyltransferase (164 aa).

S10 serves as a coordination point for substrate. ATP contacts are provided by residues 10–11 (SF) and H18. K42, L74, and R88 together coordinate substrate. ATP is bound by residues 89 to 91 (GLR), E99, and 124 to 130 (YSFLSSS).

It belongs to the bacterial CoaD family. In terms of assembly, homohexamer. It depends on Mg(2+) as a cofactor.

Its subcellular location is the cytoplasm. The enzyme catalyses (R)-4'-phosphopantetheine + ATP + H(+) = 3'-dephospho-CoA + diphosphate. The protein operates within cofactor biosynthesis; coenzyme A biosynthesis; CoA from (R)-pantothenate: step 4/5. Reversibly transfers an adenylyl group from ATP to 4'-phosphopantetheine, yielding dephospho-CoA (dPCoA) and pyrophosphate. This Exiguobacterium sibiricum (strain DSM 17290 / CCUG 55495 / CIP 109462 / JCM 13490 / 255-15) protein is Phosphopantetheine adenylyltransferase.